The following is a 523-amino-acid chain: 2-isopropylmalate synthase (523 aa).

The Pyruvate carboxyltransferase domain maps to 5 to 267; the sequence is VIIFDTTLRD…ETGINAKEIH (263 aa). Mn(2+) is bound by residues aspartate 14, histidine 202, histidine 204, and asparagine 238. A regulatory domain region spans residues 392–523; that stretch reads ELQQLVVHSD…QQNKQEFGSV (132 aa).

Belongs to the alpha-IPM synthase/homocitrate synthase family. LeuA type 1 subfamily. In terms of assembly, homodimer. It depends on Mn(2+) as a cofactor.

Its subcellular location is the cytoplasm. The catalysed reaction is 3-methyl-2-oxobutanoate + acetyl-CoA + H2O = (2S)-2-isopropylmalate + CoA + H(+). It participates in amino-acid biosynthesis; L-leucine biosynthesis; L-leucine from 3-methyl-2-oxobutanoate: step 1/4. Catalyzes the condensation of the acetyl group of acetyl-CoA with 3-methyl-2-oxobutanoate (2-ketoisovalerate) to form 3-carboxy-3-hydroxy-4-methylpentanoate (2-isopropylmalate). The polypeptide is 2-isopropylmalate synthase (Shewanella halifaxensis (strain HAW-EB4)).